The primary structure comprises 525 residues: GMP synthase [glutamine-hydrolyzing] (525 aa).

The Glutamine amidotransferase type-1 domain occupies 8–207; it reads KILILDFGSQ…ALDICQCDAN (200 aa). The Nucleophile role is filled by Cys85. Catalysis depends on residues His181 and Glu183. The GMPS ATP-PPase domain maps to 208 to 400; that stretch reads WKPASIIEDA…LGLPYDMLYR (193 aa). ATP is bound at residue 235–241; it reads SGGVDSS.

In terms of assembly, homodimer.

The enzyme catalyses XMP + L-glutamine + ATP + H2O = GMP + L-glutamate + AMP + diphosphate + 2 H(+). The protein operates within purine metabolism; GMP biosynthesis; GMP from XMP (L-Gln route): step 1/1. Functionally, catalyzes the synthesis of GMP from XMP. This chain is GMP synthase [glutamine-hydrolyzing], found in Shewanella woodyi (strain ATCC 51908 / MS32).